The chain runs to 430 residues: Adenylosuccinate synthetase (430 aa).

GTP is bound by residues 13-19 (GDEGKGK) and 41-43 (GHT). D14 (proton acceptor) is an active-site residue. Mg(2+) contacts are provided by D14 and G41. IMP-binding positions include 14-17 (DEGK), 39-42 (NAGH), T130, R144, Q225, T240, and R304. H42 (proton donor) is an active-site residue. A substrate-binding site is contributed by 300-306 (ATTGRAR). Residues R306, 332–334 (KLD), and 414–416 (STG) each bind GTP.

This sequence belongs to the adenylosuccinate synthetase family. Homodimer. Mg(2+) is required as a cofactor.

It is found in the cytoplasm. The catalysed reaction is IMP + L-aspartate + GTP = N(6)-(1,2-dicarboxyethyl)-AMP + GDP + phosphate + 2 H(+). The protein operates within purine metabolism; AMP biosynthesis via de novo pathway; AMP from IMP: step 1/2. Plays an important role in the de novo pathway of purine nucleotide biosynthesis. Catalyzes the first committed step in the biosynthesis of AMP from IMP. This chain is Adenylosuccinate synthetase, found in Pseudomonas fluorescens (strain ATCC BAA-477 / NRRL B-23932 / Pf-5).